The sequence spans 162 residues: Cyclic pyranopterin monophosphate synthase (162 aa).

Substrate contacts are provided by residues 79–81 (LCH) and 117–118 (ME). D132 is a catalytic residue.

It belongs to the MoaC family. In terms of assembly, homohexamer; trimer of dimers.

It catalyses the reaction (8S)-3',8-cyclo-7,8-dihydroguanosine 5'-triphosphate = cyclic pyranopterin phosphate + diphosphate. It functions in the pathway cofactor biosynthesis; molybdopterin biosynthesis. Functionally, catalyzes the conversion of (8S)-3',8-cyclo-7,8-dihydroguanosine 5'-triphosphate to cyclic pyranopterin monophosphate (cPMP). In Bordetella petrii (strain ATCC BAA-461 / DSM 12804 / CCUG 43448), this protein is Cyclic pyranopterin monophosphate synthase.